A 749-amino-acid chain; its full sequence is Protein lin-54 homolog (749 aa).

Lys139 participates in a covalent cross-link: Glycyl lysine isopeptide (Lys-Gly) (interchain with G-Cter in SUMO2). N6-acetyllysine occurs at positions 244 and 249. A phosphoserine mark is found at Ser264, Ser282, Ser310, and Ser314. A Glycyl lysine isopeptide (Lys-Gly) (interchain with G-Cter in SUMO2) cross-link involves residue Lys357. The interval 369–388 is disordered; that stretch reads ASSSTQPVSQNPSTNTQPLQ. Residues 521-634 form the CRC domain; sequence PRKPCNCTKS…KCIGCKNFEE (114 aa). A DNA-binding region spans residues 523 to 536; it reads KPCNCTKSLCLKLY. The Zn(2+) site is built by Cys525, Cys527, Cys532, Cys537, Cys539, Cys546, Cys549, Cys551, and Cys554. Positions 583–596 are linker; the sequence is IGKGKEGESDRRHS. Positions 599, 601, 606, 611, 613, 620, 624, 626, and 629 each coordinate Zn(2+). Positions 599–612 are DNA-binding; the sequence is CNCKRSGCLKNYCE. Ser635 carries the phosphoserine modification. Residues Lys639, Lys659, and Lys661 each participate in a glycyl lysine isopeptide (Lys-Gly) (interchain with G-Cter in SUMO2) cross-link.

The protein belongs to the lin-54 family. In terms of assembly, component of the DREAM complex (also named LINC complex) at least composed of E2F4, E2F5, LIN9, LIN37, LIN52, LIN54, MYBL1, MYBL2, RBL1, RBL2, RBBP4, TFDP1 and TFDP2. The complex exists in quiescent cells where it represses cell cycle-dependent genes. It dissociates in S phase when LIN9, LIN37, LIN52 and LIN54 form a subcomplex that binds to MYBL2.

It localises to the nucleus. Its function is as follows. Component of the DREAM complex, a multiprotein complex that can both act as a transcription activator or repressor depending on the context. In G0 phase, the complex binds to more than 800 promoters and is required for repression of E2F target genes. In S phase, the complex selectively binds to the promoters of G2/M genes whose products are required for mitosis and participates in their cell cycle dependent activation. In the complex, acts as a DNA-binding protein that binds the promoter of CDK1 in a sequence-specific manner. Specifically recognizes the consensus motif 5'-TTYRAA-3' in target DNA. The sequence is that of Protein lin-54 homolog (LIN54) from Homo sapiens (Human).